The chain runs to 691 residues: Glycine--tRNA ligase beta subunit (691 aa).

Belongs to the class-II aminoacyl-tRNA synthetase family. Tetramer of two alpha and two beta subunits.

The protein localises to the cytoplasm. The catalysed reaction is tRNA(Gly) + glycine + ATP = glycyl-tRNA(Gly) + AMP + diphosphate. The sequence is that of Glycine--tRNA ligase beta subunit from Buchnera aphidicola subsp. Schizaphis graminum (strain Sg).